The primary structure comprises 210 residues: uncharacterized protein (210 aa).

Positions 2 to 91 (SRHPEVKWAQ…AEAKWWKKLV (90 aa)) constitute a CS domain. Positions 165–210 (GMGGMGGMDEFEDESDDEEEVSKPQDAEKAAEAGKSQESDAKTETS) are disordered. Over residues 173–184 (DEFEDESDDEEE) the composition is skewed to acidic residues. Residues 185-210 (VSKPQDAEKAAEAGKSQESDAKTETS) are compositionally biased toward basic and acidic residues.

This is an uncharacterized protein from Oryza sativa subsp. indica (Rice).